A 535-amino-acid chain; its full sequence is CTP synthase (535 aa).

Residues 1–268 (MSTKYIFVTG…DQIVCDHLKL (268 aa)) are amidoligase domain. Ser14 is a CTP binding site. Ser14 is a binding site for UTP. Residue 15-20 (SMGKGI) coordinates ATP. Tyr55 provides a ligand contact to L-glutamine. Position 72 (Asp72) interacts with ATP. Mg(2+) contacts are provided by Asp72 and Glu142. CTP-binding positions include 149–151 (DME), 189–194 (KTKIAQ), and Lys225. UTP-binding positions include 189–194 (KTKIAQ) and Lys225. A Glutamine amidotransferase type-1 domain is found at 293 to 535 (KIALVGKYVE…FIRVAVENSK (243 aa)). An L-glutamine-binding site is contributed by Gly355. The Nucleophile; for glutamine hydrolysis role is filled by Cys382. L-glutamine contacts are provided by residues 383–386 (LGMQ), Glu406, and Arg464. Residues His509 and Glu511 contribute to the active site.

Belongs to the CTP synthase family. In terms of assembly, homotetramer.

The enzyme catalyses UTP + L-glutamine + ATP + H2O = CTP + L-glutamate + ADP + phosphate + 2 H(+). It carries out the reaction L-glutamine + H2O = L-glutamate + NH4(+). The catalysed reaction is UTP + NH4(+) + ATP = CTP + ADP + phosphate + 2 H(+). It participates in pyrimidine metabolism; CTP biosynthesis via de novo pathway; CTP from UDP: step 2/2. Its activity is regulated as follows. Allosterically activated by GTP, when glutamine is the substrate; GTP has no effect on the reaction when ammonia is the substrate. The allosteric effector GTP functions by stabilizing the protein conformation that binds the tetrahedral intermediate(s) formed during glutamine hydrolysis. Inhibited by the product CTP, via allosteric rather than competitive inhibition. Its function is as follows. Catalyzes the ATP-dependent amination of UTP to CTP with either L-glutamine or ammonia as the source of nitrogen. Regulates intracellular CTP levels through interactions with the four ribonucleotide triphosphates. The protein is CTP synthase of Lactococcus lactis subsp. lactis (strain IL1403) (Streptococcus lactis).